The following is a 291-amino-acid chain: Nucleotide-binding protein lin2617 (291 aa).

ATP is bound at residue 13-20; that stretch reads GMSGAGKT. GTP is bound at residue 63-66; sequence DLRG.

Belongs to the RapZ-like family.

Displays ATPase and GTPase activities. The sequence is that of Nucleotide-binding protein lin2617 from Listeria innocua serovar 6a (strain ATCC BAA-680 / CLIP 11262).